We begin with the raw amino-acid sequence, 345 residues long: N-acetyl-gamma-glutamyl-phosphate reductase (345 aa).

C149 is an active-site residue.

Belongs to the NAGSA dehydrogenase family. Type 1 subfamily.

Its subcellular location is the cytoplasm. The catalysed reaction is N-acetyl-L-glutamate 5-semialdehyde + phosphate + NADP(+) = N-acetyl-L-glutamyl 5-phosphate + NADPH + H(+). The protein operates within amino-acid biosynthesis; L-arginine biosynthesis; N(2)-acetyl-L-ornithine from L-glutamate: step 3/4. Functionally, catalyzes the NADPH-dependent reduction of N-acetyl-5-glutamyl phosphate to yield N-acetyl-L-glutamate 5-semialdehyde. The polypeptide is N-acetyl-gamma-glutamyl-phosphate reductase (Marinobacter nauticus (strain ATCC 700491 / DSM 11845 / VT8) (Marinobacter aquaeolei)).